The chain runs to 67 residues: Conotoxin Cl6.7 (67 aa).

The N-terminal stretch at 1-24 (MKVTAVLMVAVLVLTACQLTTANT) is a signal peptide. A propeptide spanning residues 25 to 39 (TDYVRRIPARKSTMS) is cleaved from the precursor. Disulfide bonds link Cys43–Cys58, Cys50–Cys62, and Cys57–Cys66.

The protein belongs to the conotoxin O1 superfamily. As to expression, expressed by the venom duct.

The protein resides in the secreted. The chain is Conotoxin Cl6.7 from Californiconus californicus (California cone).